The primary structure comprises 498 residues: MTDAFSSSSEAVLQRSVTSTHSFHPSGDLLLLYQTPETCRFITSNHFKKVALQFPDELLPDAVRVSAEIEDKTKAKTYILGDTSYGSCCVDEVAAEHVGADCIVHYGSSCLSPCRRLPLLYVFGKRPIDVHQCASSFKELYPNLQSHIIVLFDVTYSHAIDDLRTLLCDVYPNVVVSRLKTDHSCGAELIQDSCVDLQSNDDGVIFKFGRQFRIKEGQTVNDYSIFYIGQEGLTLTNFMMSWNNCVFSSFNPETSTGRVESVQINKALMKRYYAIERAKDASVVGILVGTLGVANYLIIIEQLKDTIQRAGKKSYMFAMGKINVPKLANFLEIDIYVLVACPENSLLDSSEFYRPVVTPFEMELACNKHREWTGEYVTDFRELLPGGSSHVGFPEPSQSATEEETTDVSLITGALRSCSTNSSEMMHNSETSSLVLRNQTLTVANTNAAASFLAGRSWQGLEPKLGQTPVVKAVKGQRGIAIAYEEEGNEDASTQQKL.

Cys-89, Cys-110, and Cys-341 together coordinate [4Fe-4S] cluster.

The protein belongs to the DPH1/DPH2 family. DPH2 subfamily. Component of the 2-(3-amino-3-carboxypropyl)histidine synthase complex composed of dph1, dph2, dph3 and a NADH-dependent reductase. [4Fe-4S] cluster is required as a cofactor.

Its pathway is protein modification; peptidyl-diphthamide biosynthesis. In terms of biological role, required for the first step of diphthamide biosynthesis, a post-translational modification of histidine which occurs in elongation factor 2. Dph1 and dph2 transfer a 3-amino-3-carboxypropyl (ACP) group from S-adenosyl-L-methionine (SAM) to a histidine residue, the reaction is assisted by a reduction system comprising dph3 and a NADH-dependent reductase. Facilitates the reduction of the catalytic iron-sulfur cluster found in the dph1 subunit. This is 2-(3-amino-3-carboxypropyl)histidine synthase subunit 2 (dph2) from Danio rerio (Zebrafish).